Reading from the N-terminus, the 377-residue chain is [2-(trimethylamino)ethyl]phosphonate dioxygenase (377 aa).

The interval 95–119 is disordered; that stretch reads DTDQSSEVGRTSPDVETWDSSQPAP. [2-(trimethylamino)ethyl]phosphonate is bound at residue asparagine 187. Histidine 198 provides a ligand contact to 2-oxoglutarate. Fe(2+) is bound by residues histidine 198 and aspartate 200. [2-(trimethylamino)ethyl]phosphonate is bound by residues aspartate 200, asparagine 201, tyrosine 203, asparagine 286, and arginine 288. 2-oxoglutarate is bound by residues histidine 341, arginine 343, and arginine 352. Position 341 (histidine 341) interacts with Fe(2+).

This sequence belongs to the gamma-BBH/TMLD family. As to quaternary structure, homodimer. The cofactor is Fe(2+). L-ascorbate serves as cofactor.

The catalysed reaction is [2-(trimethylamino)ethyl]phosphonate + 2-oxoglutarate + O2 = [(1R)-1-hydroxy-2-(trimethylamino)ethyl]phosphonate + succinate + CO2. Its function is as follows. Involved in the degradation of the naturally occurring organophosphonate 2-(trimethylammonio)ethylphosphonate (TMAEP). Catalyzes the hydroxylation of TMAEP to (R)-1-hydroxy-2-(trimethylammonio)ethylphosphonate (OH-TMAEP). Is highly specific for its N-trimethylated substrate. Cannot use gamma-butyrobetaine as substrate. The protein is [2-(trimethylamino)ethyl]phosphonate dioxygenase of Leisingera caerulea (Phaeobacter caeruleus).